The primary structure comprises 380 residues: Alpha-N-acetylneuraminate alpha-2,8-sialyltransferase ST8SIA3 (380 aa).

Topologically, residues 1–9 are cytoplasmic; the sequence is MRNCKMARV. Residues 10–33 form a helical; Signal-anchor for type II membrane protein membrane-spanning segment; it reads ASVLGLVMLSVALLNLSLISYVSL. Over 34–380 the chain is Lumenal; that stretch reads KKENIFATPK…LTKLTLSHCA (347 aa). Asn-93 and Asn-113 each carry an N-linked (GlcNAc...) asparagine glycan. Disulfide bonds link Cys-162/Cys-313 and Cys-176/Cys-379. CMP-N-acetyl-beta-neuraminate contacts are provided by Asn-167 and Asn-190. Asn-206 is a glycosylation site (N-linked (GlcNAc...) asparagine). CMP-N-acetyl-beta-neuraminate is bound by residues Ser-300, Thr-301, Gly-302, Trp-322, Tyr-336, and His-337. Catalysis depends on His-354, which acts as the Proton donor/acceptor.

This sequence belongs to the glycosyltransferase 29 family. Homodimer. Autopolysialylated.

Its subcellular location is the golgi apparatus membrane. It catalyses the reaction [N-acetyl-alpha-D-neuraminosyl-(2-&gt;8)](n) + CMP-N-acetyl-beta-neuraminate = [N-acetyl-alpha-D-neuraminosyl-(2-&gt;8)](n+1) + CMP + H(+). It carries out the reaction alpha-Neu5Ac-(2-&gt;3)-beta-D-Gal-(1-&gt;4)-6S-D-GlcNAc + CMP-N-acetyl-beta-neuraminate = alpha-Neu5Ac-(2-&gt;8)-alpha-Neu5Ac-(2-&gt;3)-beta-D-Gal-(1-&gt;4)-6S-D-GlcNAc + CMP + H(+). The catalysed reaction is a ganglioside GM3 (d18:1(4E)) + CMP-N-acetyl-beta-neuraminate = a ganglioside GD3 (d18:1(4E)) + CMP + H(+). The enzyme catalyses a ganglioside GM3 + CMP-N-acetyl-beta-neuraminate = a ganglioside GD3 + CMP + H(+). It catalyses the reaction an N-acetyl-alpha-neuraminyl-(2-&gt;3)-beta-D-galactosyl derivative + CMP-N-acetyl-beta-neuraminate = an N-acetyl-alpha-neuraminyl-(2-&gt;8)-N-acetyl-alpha-neuraminyl-(2-&gt;3)-beta-D-galactosyl derivative + CMP + H(+). It carries out the reaction an N-acetyl-alpha-neuraminyl-(2-&gt;3)-beta-D-galactosyl-(1-&gt;4)-N-acetyl-beta-D-glucosaminyl derivative + CMP-N-acetyl-beta-neuraminate = an alpha-Neu5Ac-(2-&gt;8)-alpha-Neu5Ac-(2-&gt;3)-beta-D-Gal-(1-&gt;4)-beta-D-GlcNAc derivative + CMP + H(+). The protein operates within protein modification; protein glycosylation. Its function is as follows. Catalyzes the transfer of sialic acid from a CMP-linked sialic acid donor onto a terminal alpha-2,3-, alpha-2,6-, or alpha-2,8-linked sialic acid of an acceptor, such as N-linked oligosaccharides of glycoproteins and glycolipids through alpha-2,8-linkages. Forms oligosialic and polysialic acid on various sialylated N-acetyllactosamine oligosaccharides of glycoproteins, including FETUB N-glycans, a2-HS-glycoprotein (AHSG) and alpha 2,3-sialylated glycosphingolipids, such as alpha 2,3-sialylparagloboside and ganglioside GM3 and to a lesser extent NCAM1 N-glycans. However, it is much more specific to N-linked oligosaccharides of glycoproteins than glycosphingolipids. 2,3-sialylparagloboside serves as the best acceptor substrate among the glycolipids. alpha-Neu5Ac-(2-&gt;8)-alpha-Neu5Ac-(2-&gt;3)-beta-D-Gal-(1-&gt;4)-6S-D-GlcNAc and monosialyl and disialyl N-acetyllactosamines are the best acceptor substrates among glycoproteins. May plays critical role in the striatum by mediating the formation of disialylated and trisialylated terminal glycotopes on N- and O-glycans of specific striatal proteins, regulating their distribution in lipid rafts, affecting their interaction with other binding partners, and subsequently modulating striatal functions. This Pan troglodytes (Chimpanzee) protein is Alpha-N-acetylneuraminate alpha-2,8-sialyltransferase ST8SIA3.